The sequence spans 270 residues: Thiosulfate dehydrogenase (270 aa).

A signal peptide spans methionine 1–alanine 27. 2 consecutive Cytochrome c domains span residues proline 44–alanine 158 and proline 174–proline 260. Residues cysteine 76, cysteine 79, histidine 80, cysteine 187, cysteine 190, and histidine 191 each coordinate heme c.

In terms of assembly, monomer. In terms of processing, binds 2 heme c groups covalently per subunit.

Its subcellular location is the periplasm. The enzyme catalyses 2 thiosulfate + 2 Fe(III)-[cytochrome c] = tetrathionate + 2 Fe(II)-[cytochrome c] + 2 H(+). Its function is as follows. Catalyzes the oxidation of 2 molecules of thiosulfate to tetrathionate. The chain is Thiosulfate dehydrogenase (tsdA) from Allochromatium vinosum (strain ATCC 17899 / DSM 180 / NBRC 103801 / NCIMB 10441 / D) (Chromatium vinosum).